Here is a 560-residue protein sequence, read N- to C-terminus: MAKKVAVIGAGVSGLSSIKCCLDENLEPTCFERSSDFGGLWKFAEASEDGMTRVYRSLVTNVCKEMSCYSDFPFHEDYPNFMSHEKFWDYLREFAEHFGLLKYIRFKTTVRSVTKRPDFSETGQWEVVTETEGKQDRAVFDAVMVCTGQFLSPRLPLESFPGIHKFKGQILHSQEYRIPDAFRGKRILVVGLGNTGGDVAVELSGIAAQVFLSTRTGAWVRSRSSVGGYPLNMMQTRWRNFLAQVLPSRFVSWNQERQMNKIFNHENYGLSIAKGKKPKFIVNDELPTCILCGKITMKTSVKDFTESSIVFEDGTIEANIDVVIFTTGYEFSFPFFEEPLKSLCTKKVILYKRVFPPNLERSTLAIIGLISLTGSILVGTEFQARWATRVFKGLCNIPPSQKLMAEAIKKEELIKRGVIKDTSQDKLDFISYMDELTQCIGAKPNIPLLFLKDPRLAWEVFFGPCTPYQYRLMGPGRWDGARNAILTQWDRTVKPLKTRTVPKSQEPASLSRYLKTWGAPVLIVSLLLIYKSSLFLELVQSKLQGRFSPSRILWYIPQNS.

Residues 9–13 (GAGVS), Glu32, and 40–41 (LW) each bind FAD. Residues 60–61 (TN) and 195–198 (TGGD) contribute to the NADP(+) site. A helical membrane pass occupies residues 519–539 (APVLIVSLLLIYKSSLFLELV).

The protein belongs to the FMO family. Requires FAD as cofactor. As to expression, detected in liver and kidney (at protein level).

It localises to the microsome membrane. Its subcellular location is the endoplasmic reticulum membrane. It catalyses the reaction N,N-dimethylaniline + NADPH + O2 + H(+) = N,N-dimethylaniline N-oxide + NADP(+) + H2O. Its function is as follows. This protein is involved in the oxidative metabolism of a variety of xenobiotics such as drugs and pesticides. This is Dimethylaniline monooxygenase [N-oxide-forming] 4 (Fmo4) from Rattus norvegicus (Rat).